We begin with the raw amino-acid sequence, 271 residues long: 2,3,4,5-tetrahydropyridine-2,6-dicarboxylate N-succinyltransferase (271 aa).

Residues arginine 102 and aspartate 139 each coordinate substrate.

This sequence belongs to the transferase hexapeptide repeat family. Homotrimer.

The protein localises to the cytoplasm. It catalyses the reaction (S)-2,3,4,5-tetrahydrodipicolinate + succinyl-CoA + H2O = (S)-2-succinylamino-6-oxoheptanedioate + CoA. The protein operates within amino-acid biosynthesis; L-lysine biosynthesis via DAP pathway; LL-2,6-diaminopimelate from (S)-tetrahydrodipicolinate (succinylase route): step 1/3. This is 2,3,4,5-tetrahydropyridine-2,6-dicarboxylate N-succinyltransferase from Coxiella burnetii (strain RSA 331 / Henzerling II).